Here is a 219-residue protein sequence, read N- to C-terminus: Exosomal polycystin-1-interacting protein (219 aa).

The signal sequence occupies residues 1-19 (MAPPSRHCLLLISTLGVFA). 5 N-linked (GlcNAc...) asparagine glycosylation sites follow: N29, N42, N95, N188, and N210.

This sequence belongs to the EPCIP family. As to quaternary structure, homooligomer. Interacts with PKD1 (via the PKD repeats in the N-terminal extracellular region); the interaction is not dependent on N-glycosylation of either protein. N-glycosylated. Detected in the kidney and in the endothelium of large blood vessels (at protein level).

It localises to the vesicle. Its subcellular location is the secreted. The protein localises to the extracellular exosome. In terms of biological role, likely to be involved with PKD1 in the detection, sequestration and exocytosis of senescent mitochondria. The chain is Exosomal polycystin-1-interacting protein from Homo sapiens (Human).